Consider the following 138-residue polypeptide: Ribulose bisphosphate carboxylase small subunit (138 aa).

This sequence belongs to the RuBisCO small chain family. In terms of assembly, heterohexadecamer of 8 large and 8 small subunits.

Its subcellular location is the plastid. The protein localises to the chloroplast. Functionally, ruBisCO catalyzes two reactions: the carboxylation of D-ribulose 1,5-bisphosphate, the primary event in carbon dioxide fixation, as well as the oxidative fragmentation of the pentose substrate in the photorespiration process. Both reactions occur simultaneously and in competition at the same active site. Although the small subunit is not catalytic it is essential for maximal activity. The polypeptide is Ribulose bisphosphate carboxylase small subunit (Antithamnion sp. (Red alga)).